The following is a 455-amino-acid chain: Chromosomal replication initiator protein DnaA (455 aa).

The tract at residues 1-75 (MDTNNNIEKE…EILSQNKVGM (75 aa)) is domain I, interacts with DnaA modulators. The segment at 75–106 (MHLAHSVDVRIEVAPKIQINAQANINYKAIKT) is domain II. Positions 107 to 321 (SVKDSYTFEN…GAIIKISVNA (215 aa)) are domain III, AAA+ region. ATP is bound by residues Gly-151, Gly-153, Lys-154, and Thr-155. A domain IV, binds dsDNA region spans residues 322–455 (NLMNAPIDLN…DKKTAFNSSE (134 aa)).

It belongs to the DnaA family. As to quaternary structure, oligomerizes as a right-handed, spiral filament on DNA at oriC.

It is found in the cytoplasm. Functionally, plays an essential role in the initiation and regulation of chromosomal replication. ATP-DnaA binds to the origin of replication (oriC) to initiate formation of the DNA replication initiation complex once per cell cycle. Binds the DnaA box (a 9 base pair repeat at the origin) and separates the double-stranded (ds)DNA. Forms a right-handed helical filament on oriC DNA; dsDNA binds to the exterior of the filament while single-stranded (ss)DNA is stabiized in the filament's interior. The ATP-DnaA-oriC complex binds and stabilizes one strand of the AT-rich DNA unwinding element (DUE), permitting loading of DNA polymerase. After initiation quickly degrades to an ADP-DnaA complex that is not apt for DNA replication. Binds acidic phospholipids. The polypeptide is Chromosomal replication initiator protein DnaA (Helicobacter pylori (strain G27)).